A 206-amino-acid chain; its full sequence is Small ribosomal subunit protein uS4 (206 aa).

One can recognise an S4 RNA-binding domain in the interval 96–156; the sequence is GRLDNVVYRM…EKSKKQARIK (61 aa).

The protein belongs to the universal ribosomal protein uS4 family. As to quaternary structure, part of the 30S ribosomal subunit. Contacts protein S5. The interaction surface between S4 and S5 is involved in control of translational fidelity.

Functionally, one of the primary rRNA binding proteins, it binds directly to 16S rRNA where it nucleates assembly of the body of the 30S subunit. With S5 and S12 plays an important role in translational accuracy. The polypeptide is Small ribosomal subunit protein uS4 (Pasteurella multocida (strain Pm70)).